The following is a 292-amino-acid chain: NAD kinase (292 aa).

D73 serves as the catalytic Proton acceptor. NAD(+)-binding positions include 73–74 (DG), 147–148 (NE), H158, R175, D177, 188–193 (TAYSLS), and Q247.

The protein belongs to the NAD kinase family. A divalent metal cation is required as a cofactor.

The protein resides in the cytoplasm. The catalysed reaction is NAD(+) + ATP = ADP + NADP(+) + H(+). Involved in the regulation of the intracellular balance of NAD and NADP, and is a key enzyme in the biosynthesis of NADP. Catalyzes specifically the phosphorylation on 2'-hydroxyl of the adenosine moiety of NAD to yield NADP. This chain is NAD kinase, found in Shigella boydii serotype 18 (strain CDC 3083-94 / BS512).